Consider the following 992-residue polypeptide: ATP-dependent 6-phosphofructokinase subunit alpha (992 aa).

The segment at 1 to 558 (MNNSVYGVAF…LYSNFMSTTV (558 aa)) is N-terminal catalytic PFK domain 1. Residues Gly193, 256 to 257 (RS), and 286 to 289 (GDGS) contribute to the ATP site. Asp287 serves as a coordination point for Mg(2+). Beta-D-fructose 6-phosphate is bound by residues 332–334 (SID), Arg369, 376–378 (MGR), Glu433, Lys460, and 466–469 (HVQR). The Proton acceptor role is filled by Asp334. The tract at residues 559 to 572 (NDDGSQLLPEADRL) is interdomain linker. The C-terminal regulatory PFK domain 2 stretch occupies residues 573–992 (NIAIVHVGAP…AAKEDSALYV (420 aa)). Beta-D-fructose 2,6-bisphosphate-binding positions include Arg643, 700–704 (TVSNN), Arg738, 745–747 (QGG), Glu805, Arg831, 837–840 (HVQQ), and Arg929.

The protein belongs to the phosphofructokinase type A (PFKA) family. ATP-dependent PFK group I subfamily. Eukaryotic two domain clade 'E' sub-subfamily. As to quaternary structure, heterooctamer of 4 alpha and 4 beta chains. Requires Mg(2+) as cofactor.

Its subcellular location is the cytoplasm. The catalysed reaction is beta-D-fructose 6-phosphate + ATP = beta-D-fructose 1,6-bisphosphate + ADP + H(+). The protein operates within carbohydrate degradation; glycolysis; D-glyceraldehyde 3-phosphate and glycerone phosphate from D-glucose: step 3/4. Allosterically activated by ADP, AMP, or fructose 2,6-bisphosphate, and allosterically inhibited by ATP or citrate. Catalyzes the phosphorylation of D-fructose 6-phosphate to fructose 1,6-bisphosphate by ATP, the first committing step of glycolysis. The sequence is that of ATP-dependent 6-phosphofructokinase subunit alpha (PFK1) from Kluyveromyces lactis (strain ATCC 8585 / CBS 2359 / DSM 70799 / NBRC 1267 / NRRL Y-1140 / WM37) (Yeast).